We begin with the raw amino-acid sequence, 369 residues long: Dehydrogenase pigH (369 aa).

The 355-residue stretch at 13-367 (KAPLLEVKAA…QGVSAKKIVV (355 aa)) folds into the Enoyl reductase (ER) domain. Residue 44–49 (IDWLIQ) participates in NADP(+) binding. N-linked (GlcNAc...) asparagine glycans are attached at residues Asn-79 and Asn-101. NADP(+) is bound by residues 197 to 200 (SRKN) and Tyr-215. The chain crosses the membrane as a helical span at residues 280 to 300 (TIIFFVSWIISFKFKGLLKGI). Residue 360–361 (VS) participates in NADP(+) binding.

Belongs to the zinc-containing alcohol dehydrogenase family.

The protein localises to the membrane. Its pathway is secondary metabolite biosynthesis. In terms of biological role, dehydrogenase; part of the gene cluster that mediates the biosynthesis of azaphilone pigments (MonAzPs), a complex mixture of compounds with a common azaphilone skeleton very widely used as food colorants. Within the pathway, pigH might be involved in the late steps of yellow pigments monascin and ankaflavin biosynthesis. The first step of the pathway is performed by the nrPKS pigA that forms the hexaketide precursor from successive condensations of five malonyl-CoA units, with a simple acetyl-CoA starter unit. The role of esterase pigG is not clear, but it may play at most a supplementary role in the formation of the benzaldehyde produced by the pigA nrPKS. This very reactive benzaldehyde is intercepted by the pigC ketoreductase that to provide the first stable enzyme-free MonAzPs intermediate, 6-(4-hydroxy-2-oxopentyl)-3-methyl-2,4-dioxocyclohexane carbaldehyde, also known as M7PKS-1. The FAD-dependent monooxygenase pigN hydroxylates M7PKS-1 at C-4, which triggers the formation of the pyran ring. PigJ, pigK and pigD are involved in the acetylation of the pyran ring. PigJ and pigK form the two subunits of a dedicated fungal FAS that produces the side chain fatty acyl moiety of MonAzPs and pigD transfers the fatty acyl chain to the C-4 alcohol. PigM and pigO are involved in the elimination of the omega-1 alcohol. PigM acts as an O-acetyltransferase that synthesizes the putative O-11 acetyl intermediate whereas pigO eliminates acetic acid to yield an intermediate with a C10(11) double bond. The dehydration of the C-11 alcohol followed by the reduction of the C6(7) double bond by the NAD(P)H-dependent oxidoreductase pigE increases the electrophilicity of the C-5 ketone of the resulting acyl benzopyran. This in turn sets up the C-5 ketone for an intramolecular Knoevenagel aldol condensation with the C-20 enol of the side chain. This condensation affords the characteristic linear tricyclic carbon skeletons of the yellow pigments that serve as the common precursors for the classical yellow pigments monascin and ankaflavin, orange pigments rubopunctatin and monascorubrin, and red pigments ribropunctamine and monascorubramine. The FAD-dependent oxidoreductase pigF is especially invoved in the biosynthesis of orange and red pigments via desaturation of C6(7). The chain is Dehydrogenase pigH from Monascus ruber (Mold).